The chain runs to 206 residues: Ras-related protein Ral-A (206 aa).

Position 21 to 28 (21 to 28 (GSGGVGKS)) interacts with GTP. Positions 43–51 (YEPTKADSY) match the Effector region motif. GTP is bound by residues 68–72 (DTAGQ) and 127–130 (NKSD). S194 bears the Phosphoserine mark. At C203 the chain carries Cysteine methyl ester. The S-geranylgeranyl cysteine moiety is linked to residue C203. The propeptide at 204 to 206 (CIL) is removed in mature form.

It belongs to the small GTPase superfamily. Ras family. Interacts (via effector domain) with RALBP1; during mitosis, recruits RALBP1 to the mitochondrion where it promotes DNM1L phosphorylation and mitochondrial fission. Interacts with EXOC2/Sec5 and EXOC8/Exo84; binding to EXOC2 and EXOC8 is mutually exclusive. Interacts with Clostridium exoenzyme C3. Interacts with RALGPS1. Interacts with LPAR1 and LPAR2. Interacts with GRK2 in response to LPAR1 activation. RALA and GRK2 binding to LPAR1 is mutually exclusive. Interacts with CDC42. Prenylation is essential for membrane localization. Post-translationally, phosphorylated. Phosphorylation at Ser-194 by AURKA/Aurora kinase A, during mitosis, induces RALA localization to the mitochondrion where it regulates mitochondrial fission.

It localises to the cell membrane. Its subcellular location is the cleavage furrow. It is found in the midbody. The protein resides in the midbody ring. The protein localises to the mitochondrion. The enzyme catalyses GTP + H2O = GDP + phosphate + H(+). Its activity is regulated as follows. Alternates between an inactive form bound to GDP and an active form bound to GTP. Activated by a guanine nucleotide-exchange factor (GEF) and inactivated by a GTPase-activating protein (GAP). In terms of biological role, multifunctional GTPase involved in a variety of cellular processes including gene expression, cell migration, cell proliferation, oncogenic transformation and membrane trafficking. Accomplishes its multiple functions by interacting with distinct downstream effectors. Acts as a GTP sensor for GTP-dependent exocytosis of dense core vesicles. Key regulator of LPAR1 signaling and competes with GRK2 for binding to LPAR1 thus affecting the signaling properties of the receptor. Required for anchorage-independent proliferation of transformed cells. The RALA-exocyst complex regulates integrin-dependent membrane raft exocytosis and growth signaling. During mitosis, supports the stabilization and elongation of the intracellular bridge between dividing cells. Cooperates with EXOC2 to recruit other components of the exocyst to the early midbody. During mitosis, also controls mitochondrial fission by recruiting to the mitochondrion RALBP1, which mediates the phosphorylation and activation of DNM1L by the mitotic kinase cyclin B-CDK1. The chain is Ras-related protein Ral-A (Rala) from Mus musculus (Mouse).